The primary structure comprises 176 residues: NAD(P)H-quinone oxidoreductase subunit J (176 aa).

The tract at residues 1–32 is disordered; that stretch reads MEKEGLAKSSDTSIKKEGFISQSLSKDGIPNQ. Positions 20-32 are enriched in polar residues; sequence ISQSLSKDGIPNQ.

This sequence belongs to the complex I 30 kDa subunit family. In terms of assembly, NDH-1 can be composed of about 15 different subunits; different subcomplexes with different compositions have been identified which probably have different functions.

It is found in the cellular thylakoid membrane. The enzyme catalyses a plastoquinone + NADH + (n+1) H(+)(in) = a plastoquinol + NAD(+) + n H(+)(out). It catalyses the reaction a plastoquinone + NADPH + (n+1) H(+)(in) = a plastoquinol + NADP(+) + n H(+)(out). Functionally, NDH-1 shuttles electrons from an unknown electron donor, via FMN and iron-sulfur (Fe-S) centers, to quinones in the respiratory and/or the photosynthetic chain. The immediate electron acceptor for the enzyme in this species is believed to be plastoquinone. Couples the redox reaction to proton translocation, and thus conserves the redox energy in a proton gradient. Cyanobacterial NDH-1 also plays a role in inorganic carbon-concentration. In Prochlorococcus marinus (strain MIT 9215), this protein is NAD(P)H-quinone oxidoreductase subunit J.